We begin with the raw amino-acid sequence, 754 residues long: Protein NUCLEOLAR FACTOR 1 (754 aa).

Disordered regions lie at residues 1-56 (MAPN…EAMV), 69-166 (SLGS…ELST), and 390-413 (EDTDDCDGEKTTSKNGNSIKQKSS). A compositionally biased stretch (acidic residues) spans 42 to 52 (SPEESSIEAES). Over residues 80-93 (MNKRRQREEEGKSD) the composition is skewed to basic and acidic residues. Acidic residues-rich tracts occupy residues 94–110 (TEEDEDDEDEDEEENSG) and 138–161 (DTQEDNDNQSEEEDPDDYETDEEV). The span at 402–413 (SKNGNSIKQKSS) shows a compositional bias: polar residues.

This sequence belongs to the UTP25 family. As to quaternary structure, component of the ribosomal small subunit (SSU) processome composed of at least 40 protein subunits and snoRNA U3. Interacts with THAL in the nucleus. Preferentially expressed in differentiating cells in young tissues such as floral buds, ovules, embryos, secondary roots, pollen, young seedlings and vascular bundles. Observed ubiquitously.

The protein resides in the nucleus. The protein localises to the nucleolus. DEAD-box RNA helicase-like protein required for pre-18S rRNA processing, specifically at sites A0, A1, and A2. Involved in the control of rRNA expression. Required for embryo development and female gametogenesis. The sequence is that of Protein NUCLEOLAR FACTOR 1 from Arabidopsis thaliana (Mouse-ear cress).